The primary structure comprises 55 residues: Accessory gland-specific peptide 70A (55 aa).

An N-terminal signal peptide occupies residues 1 to 19; sequence MKTLALFLVLVCVLGLVQS. Residues 20–33 form an essential for binding to sperm region; that stretch reads WEWPWNRKPTKFPI. Residues Pro28 and Pro32 each carry the hydroxyproline modification. Residue Ile33 is modified to Isoleucine derivative. 3 positions are modified to hydroxyproline: Pro34, Pro36, and Pro38. The tract at residues 36–55 is sufficient to induce PMR; it reads PNPRDKWCRLNLGPAWGGRC. Cys43 and Cys55 are disulfide-bonded.

Belongs to the Drosophila sex peptide family. Sperm-bound protein is cleaved to release an active C-terminal peptide. Gradual release from stored sperm may function to prolong PMR and enhance male reproductive success. In terms of tissue distribution, main cells of the accessory glands of males (paragonial gland).

The protein localises to the secreted. Functionally, male seminal protein which triggers short- and long-term post-mating behavioral responses (PMR) in female Drosophila. Binds initially to sperm where it is later cleaved to release an active peptide within the female reproductive tract. Signals via the sex peptide receptor (SPR) in female flies; may also act via other receptors. Moderates the activity of distinct neuronal circuitries in the female genital tract to promote specific PMRs including: enhanced ovulation, increased egg laying rate, increased feeding/foraging rate, induced antimicrobial peptide synthesis, reduced mating receptivity, reduced day-time sleep and reduced lifespan in multiple mated females. The polypeptide is Accessory gland-specific peptide 70A (SP) (Drosophila melanogaster (Fruit fly)).